We begin with the raw amino-acid sequence, 203 residues long: Thymidylate kinase (203 aa).

10–17 (GTEGSGKS) contributes to the ATP binding site.

Belongs to the thymidylate kinase family.

The catalysed reaction is dTMP + ATP = dTDP + ADP. Its function is as follows. Phosphorylation of dTMP to form dTDP in both de novo and salvage pathways of dTTP synthesis. The polypeptide is Thymidylate kinase (Dichelobacter nodosus (strain VCS1703A)).